The primary structure comprises 151 residues: Deoxyuridine 5'-triphosphate nucleotidohydrolase (151 aa).

Substrate contacts are provided by residues Arg-70–Gly-72, Asn-83, and Thr-87–Asp-89.

Belongs to the dUTPase family. Requires Mg(2+) as cofactor.

The enzyme catalyses dUTP + H2O = dUMP + diphosphate + H(+). Its pathway is pyrimidine metabolism; dUMP biosynthesis; dUMP from dCTP (dUTP route): step 2/2. In terms of biological role, this enzyme is involved in nucleotide metabolism: it produces dUMP, the immediate precursor of thymidine nucleotides and it decreases the intracellular concentration of dUTP so that uracil cannot be incorporated into DNA. This chain is Deoxyuridine 5'-triphosphate nucleotidohydrolase, found in Ruegeria pomeroyi (strain ATCC 700808 / DSM 15171 / DSS-3) (Silicibacter pomeroyi).